The primary structure comprises 75 residues: uncharacterized protein (75 aa).

The chain crosses the membrane as a helical span at residues 4–26; sequence PSLLFLGFSGVLAFGEVGWVGVY.

Its subcellular location is the membrane. This is an uncharacterized protein from Treponema pallidum (strain Nichols).